The primary structure comprises 887 residues: Golgin IMH1 (887 aa).

Disordered regions lie at residues 16–50 (LAKG…EELP), 142–214 (QESL…MKSQ), 240–301 (GASQ…SAGD), and 783–822 (LKMS…SISS). 2 stretches are compositionally biased toward basic and acidic residues: residues 37 to 50 (GRRE…EELP) and 145 to 210 (LEQR…HAAE). Positions 118–241 (AMLTEEIKRI…YKSTIQELGA (124 aa)) form a coiled coil. Positions 240-254 (GASQATGEAQPSSEA) are enriched in polar residues. The span at 258-273 (RGKKGKGKRGKGKKRV) shows a compositional bias: basic residues. The stretch at 299 to 788 (AGDEIIEAIE…LSTQLKMSKD (490 aa)) forms a coiled coil. Residues 788-807 (DMSSQSRHSSRSGSLVSPSS) are compositionally biased toward low complexity. Over residues 808 to 822 (DNETGNSPRKISISS) the composition is skewed to polar residues. Residues 837 to 885 (EMESNEKLAYIRNVLLGFLEHREQRSQLLPVVSTLLQLSSHDEKRLLTS) enclose the GRIP domain.

The protein resides in the cytoplasm. It localises to the golgi apparatus membrane. Its function is as follows. Involved in vesicular transport between an endosomal compartment and the Golgi apparatus. The chain is Golgin IMH1 (IMH1) from Eremothecium gossypii (strain ATCC 10895 / CBS 109.51 / FGSC 9923 / NRRL Y-1056) (Yeast).